Consider the following 304-residue polypeptide: Neurexophilin-4 (304 aa).

The N-terminal stretch at 1-23 (MRLLPEWLLLLFGPWLLRKVISG) is a signal peptide. The tract at residues 24 to 84 (QIVESGRPQY…GALARPGAAG (61 aa)) is II. N-linked (GlcNAc...) asparagine glycans are attached at residues Asn-72, Asn-133, Asn-143, and Asn-149. The segment at 85–163 (GPPVPRTKRK…IVPPSKRVEF (79 aa)) is III. Residues 164 to 220 (GGVWLPGPAPHPLQSTLALEGVLPGLGPPLGMAGQGLGGNLGGALAGPLGGALGVPG) are IV (linker domain). The interval 221–304 (AKESRAFNCH…NFQSEHPYFG (84 aa)) is v (Cys-rich).

It belongs to the neurexophilin family. Post-translationally, may be proteolytically processed in neuron-like cells. As to expression, brain and kidney.

It localises to the secreted. Its function is as follows. May be signaling molecules that resemble neuropeptides and that act by binding to alpha-neurexins and possibly other receptors. In Rattus norvegicus (Rat), this protein is Neurexophilin-4 (Nxph4).